The primary structure comprises 420 residues: Gamma-glutamyl phosphate reductase (420 aa).

It belongs to the gamma-glutamyl phosphate reductase family.

It is found in the cytoplasm. The enzyme catalyses L-glutamate 5-semialdehyde + phosphate + NADP(+) = L-glutamyl 5-phosphate + NADPH + H(+). Its pathway is amino-acid biosynthesis; L-proline biosynthesis; L-glutamate 5-semialdehyde from L-glutamate: step 2/2. In terms of biological role, catalyzes the NADPH-dependent reduction of L-glutamate 5-phosphate into L-glutamate 5-semialdehyde and phosphate. The product spontaneously undergoes cyclization to form 1-pyrroline-5-carboxylate. The chain is Gamma-glutamyl phosphate reductase from Chlorobium luteolum (strain DSM 273 / BCRC 81028 / 2530) (Pelodictyon luteolum).